The sequence spans 474 residues: Lysosomal protective protein (474 aa).

A signal peptide spans 1-23 (MPGTALSPLLLLLLLSWASRNEA). Cystine bridges form between cysteine 83–cysteine 356, cysteine 235–cysteine 251, cysteine 236–cysteine 241, and cysteine 276–cysteine 325. Asparagine 140 carries an N-linked (GlcNAc...) (high mannose) asparagine glycan. Serine 173 is a catalytic residue. The N-linked (GlcNAc...) (high mannose) asparagine glycan is linked to asparagine 327. Active-site residues include aspartate 394 and histidine 451.

This sequence belongs to the peptidase S10 family. As to quaternary structure, heterodimer of a 32 kDa chain and a 20 kDa chain; disulfide-linked.

It is found in the lysosome. The catalysed reaction is Release of a C-terminal amino acid with broad specificity.. Functionally, protective protein appears to be essential for both the activity of beta-galactosidase and neuraminidase, it associates with these enzymes and exerts a protective function necessary for their stability and activity. This protein is also a carboxypeptidase and can deamidate tachykinins. The polypeptide is Lysosomal protective protein (Ctsa) (Mus musculus (Mouse)).